A 461-amino-acid polypeptide reads, in one-letter code: Glycerol-3-phosphate acyltransferase, chloroplastic (461 aa).

Residues 1–96 constitute a chloroplast transit peptide; that stretch reads MSMTGSSAYY…SPPNMSASVS (96 aa). Positions 47–76 are enriched in low complexity; it reads LLSSTSSSSSSSISLRSSTAPSPSCSSVTP. The interval 47–88 is disordered; that stretch reads LLSSTSSSSSSSISLRSSTAPSPSCSSVTPKDNCLASAKHSP. The short motif at 231–236 is the HXXXXD motif element; it reads HQTEAD.

This sequence belongs to the GPAT/DAPAT family.

Its subcellular location is the plastid. It localises to the chloroplast stroma. The catalysed reaction is sn-glycerol 3-phosphate + an acyl-CoA = a 1-acyl-sn-glycero-3-phosphate + CoA. It functions in the pathway phospholipid metabolism; CDP-diacylglycerol biosynthesis; CDP-diacylglycerol from sn-glycerol 3-phosphate: step 1/3. Esterifies acyl-group from acyl-ACP to the sn-1 position of glycerol-3-phosphate. The enzyme from chilling-resistant plants discriminates against non-fluid palmitic acid and selects oleic acid whereas the enzyme from sensitive plants accepts both fatty acids. The polypeptide is Glycerol-3-phosphate acyltransferase, chloroplastic (PLSB) (Phaseolus vulgaris (Kidney bean)).